An 828-amino-acid polypeptide reads, in one-letter code: MGGSSGGGVSYRSGGESDVELEDYEVDDFRDGIVESRGNRFNPLTNFLGLDFAGGSGGKFTVINGIRDISRGSIVHPDNRWYKAWTMFILIWALYSSFFTPLEFGFFRGLPENLFILDIAGQIAFLVDIVLTFFVAYRDSRTYRMIYKRSSIALRYLKSTFIIDLLACMPWDIIYKAAGEKEEVRYLLLIRLYRVHRVILFFHKMEKDIRINYLFTRIVKLIFVELYCTHTAACIFYYLATTLPASQEGYTWIGSLKLGDYSYSKFREIDLWTRYTTSMYFAVVTMATVGYGDIHAVNMREMIFAMVYISFDMILGAYLIGNMTALIVKGSKTERFRDKMADIMRYMNRNKLGRNIRGQITGHLRLQYESSYTEAAVLQDIPVSIRAKIAQTLYLPYIEKVPLFRGCSSEFINQIVIRLHEEFFLPGEVIMEQGSVVDQLYFVCHGVLEEIGITKDGSEEIVAVLQPDHSFGEISILCNIPQPYTVRVAELCRILRLDKQSFMNILEIFFHDGRRILNNLLEGKESNVRIKQLESDITFHISKQEAELALKLNSAAFYGDLYQLKSLIRAGGDPNKTDYDGRSPLHLAASRGYEDITLYLIQESVDVNIKDKLGSTPLLEAIKNGNDRVAALLVKEGATLNIENAGTFLCTVVAKGDSDFLKRLLSNGIDPNSKDYDHRTPLHVAASEGFYVLAIQLVEASANVLAKDRWGNTPLDEALGCGNKMLIKLLEDAKNSQISSFPSGSKEPKDKVYKKKCTVYFSHPGDSKEKRRRGIVLWVPRSIEELIRTAKEQLNVPEASCVLSEDEAKIIDVDLISDGQKLYLAVET.

Residues 1–86 lie on the Cytoplasmic side of the membrane; the sequence is MGGSSGGGVS…PDNRWYKAWT (86 aa). The chain crosses the membrane as a helical span at residues 87-107; that stretch reads MFILIWALYSSFFTPLEFGFF. Residues 108–114 lie on the Extracellular side of the membrane; that stretch reads RGLPENL. A helical membrane pass occupies residues 115–135; the sequence is FILDIAGQIAFLVDIVLTFFV. The Cytoplasmic segment spans residues 136-158; sequence AYRDSRTYRMIYKRSSIALRYLK. The chain crosses the membrane as a helical span at residues 159 to 179; it reads STFIIDLLACMPWDIIYKAAG. Over 180–185 the chain is Extracellular; it reads EKEEVR. Residues 186–206 traverse the membrane as a helical; Voltage-sensor segment; it reads YLLLIRLYRVHRVILFFHKME. Over 207–220 the chain is Cytoplasmic; that stretch reads KDIRINYLFTRIVK. A helical transmembrane segment spans residues 221-241; it reads LIFVELYCTHTAACIFYYLAT. The Extracellular portion of the chain corresponds to 242–276; the sequence is TLPASQEGYTWIGSLKLGDYSYSKFREIDLWTRYT. The segment at residues 277–296 is an intramembrane region (pore-forming); the sequence is TSMYFAVVTMATVGYGDIHA. Residues 297-300 lie on the Extracellular side of the membrane; sequence VNMR. A helical transmembrane segment spans residues 301–321; sequence EMIFAMVYISFDMILGAYLIG. At 322 to 828 the chain is on the cytoplasmic side; the sequence is NMTALIVKGS…GQKLYLAVET (507 aa). An a nucleoside 3',5'-cyclic phosphate-binding site is contributed by 403–523; the sequence is LFRGCSSEFI…RRILNNLLEG (121 aa). ANK repeat units follow at residues 545 to 576, 580 to 609, 613 to 642, 644 to 673, 677 to 706, and 710 to 740; these read EAEL…DPNK, DGRS…DVNI, LGST…TLNI, NAGT…DPNS, DHRT…NVLA, and WGNT…QISS. The region spanning 756 to 828 is the KHA domain; sequence KCTVYFSHPG…GQKLYLAVET (73 aa).

It belongs to the potassium channel family. Plant (TC 1.A.1.4) subfamily. The potassium channel is probably composed of a homo- or heterotetrameric complex of pore-forming subunits. As to expression, expressed in root pericycle and xylem parenchyma, and in flower at a lower level.

Its subcellular location is the membrane. Its function is as follows. Highly selective outward-rectifying potassium channel. Involved in potassium release into the xylem sap toward the shoots. Assuming opened or closed conformations in response to the voltage difference across the membrane, the channel is activated by depolarization. The voltage-dependence of the channel is abolished by internal or external acidification. May interact with the cytoskeleton or with regulatory proteins. The protein is Potassium channel SKOR (SKOR) of Arabidopsis thaliana (Mouse-ear cress).